Consider the following 390-residue polypeptide: Chorismate synthase (390 aa).

Residues arginine 39 and arginine 45 each coordinate NADP(+). Residues 132–134 (RSS), 253–254 (NA), glycine 298, 313–317 (KPIPT), and arginine 339 each bind FMN.

Belongs to the chorismate synthase family. In terms of assembly, homotetramer. FMNH2 serves as cofactor.

It catalyses the reaction 5-O-(1-carboxyvinyl)-3-phosphoshikimate = chorismate + phosphate. Its pathway is metabolic intermediate biosynthesis; chorismate biosynthesis; chorismate from D-erythrose 4-phosphate and phosphoenolpyruvate: step 7/7. In terms of biological role, catalyzes the anti-1,4-elimination of the C-3 phosphate and the C-6 proR hydrogen from 5-enolpyruvylshikimate-3-phosphate (EPSP) to yield chorismate, which is the branch point compound that serves as the starting substrate for the three terminal pathways of aromatic amino acid biosynthesis. This reaction introduces a second double bond into the aromatic ring system. In Bacillus cytotoxicus (strain DSM 22905 / CIP 110041 / 391-98 / NVH 391-98), this protein is Chorismate synthase.